Consider the following 168-residue polypeptide: Probable chemoreceptor glutamine deamidase CheD (168 aa).

This sequence belongs to the CheD family.

It catalyses the reaction L-glutaminyl-[protein] + H2O = L-glutamyl-[protein] + NH4(+). Its function is as follows. Probably deamidates glutamine residues to glutamate on methyl-accepting chemotaxis receptors (MCPs), playing an important role in chemotaxis. This chain is Probable chemoreceptor glutamine deamidase CheD, found in Pseudomonas syringae pv. tomato (strain ATCC BAA-871 / DC3000).